The primary structure comprises 86 residues: Electron transfer flavoprotein regulatory factor 1 (86 aa).

The protein belongs to the complex I LYR family.

It is found in the mitochondrion. Acts as a regulator of the electron transfer flavoprotein by promoting the removal of flavin from the ETF holoenzyme (composed of ETFA and ETFB). This Taeniopygia guttata (Zebra finch) protein is Electron transfer flavoprotein regulatory factor 1.